A 121-amino-acid chain; its full sequence is Large ribosomal subunit protein bL12 (121 aa).

The protein belongs to the bacterial ribosomal protein bL12 family. In terms of assembly, homodimer. Part of the ribosomal stalk of the 50S ribosomal subunit. Forms a multimeric L10(L12)X complex, where L10 forms an elongated spine to which 2 to 4 L12 dimers bind in a sequential fashion. Binds GTP-bound translation factors.

Functionally, forms part of the ribosomal stalk which helps the ribosome interact with GTP-bound translation factors. Is thus essential for accurate translation. This is Large ribosomal subunit protein bL12 from Macrococcus caseolyticus (strain JCSC5402) (Macrococcoides caseolyticum).